A 30-amino-acid polypeptide reads, in one-letter code: Natriuretic peptides A (30 aa).

Positions 1 to 3 (APR) are excised as a propeptide. Cys-11 and Cys-27 form a disulfide bridge.

It belongs to the natriuretic peptide family. In terms of processing, cleaved upon secretion to produce the functional hormone.

Its subcellular location is the secreted. Hormone playing a key role in cardiovascular homeostasis through regulation of natriuresis, diuresis, and vasodilation. Has a cGMP-stimulating activity. The polypeptide is Natriuretic peptides A (Pelophylax ridibundus (Marsh frog)).